The chain runs to 581 residues: Arginine--tRNA ligase (581 aa).

The short motif at Pro126–His136 is the 'HIGH' region element.

Belongs to the class-I aminoacyl-tRNA synthetase family. Monomer.

The protein resides in the cytoplasm. The catalysed reaction is tRNA(Arg) + L-arginine + ATP = L-arginyl-tRNA(Arg) + AMP + diphosphate. The chain is Arginine--tRNA ligase from Shewanella baltica (strain OS155 / ATCC BAA-1091).